We begin with the raw amino-acid sequence, 115 residues long: MAQGQGFGFGLGKMKELAAAIQKAQQVQEGAKKLQEDLERMDIEGQAAGGAVKVIMSGTQEPRRVEISPDLLSEGAEVLSDLVTAAMRDAYQKSTATMRERMEELTGSLNVPGLG.

The protein belongs to the YbaB/EbfC family. In terms of assembly, homodimer.

It localises to the cytoplasm. Its subcellular location is the nucleoid. In terms of biological role, binds to DNA and alters its conformation. May be involved in regulation of gene expression, nucleoid organization and DNA protection. This chain is Nucleoid-associated protein tlr0723, found in Thermosynechococcus vestitus (strain NIES-2133 / IAM M-273 / BP-1).